The following is a 29-amino-acid chain: PSSQPRGDPTGQEEPKKKVEKKTTTDPFD.

The disordered stretch occupies residues 1–29; the sequence is PSSQPRGDPTGQEEPKKKVEKKTTTDPFD. The short motif at 6 to 8 is the Cell attachment site element; it reads RGD. Over residues 13–29 the composition is skewed to basic and acidic residues; the sequence is EEPKKKVEKKTTTDPFD.

This sequence belongs to the lentiviruses Tat family. As to quaternary structure, interacts with host CCNT1. Associates with the P-TEFb complex composed at least of Tat, P-TEFb (CDK9 and CCNT1), TAR RNA, RNA Pol II. Recruits the HATs CREBBP, TAF1/TFIID, EP300, PCAF and GCN5L2. Interacts with host KAT5/Tip60; this interaction targets the latter to degradation. Interacts with the host deacetylase SIRT1. Interacts with host capping enzyme RNGTT; this interaction stimulates RNGTT. Binds to host KDR, and to the host integrins ITGAV/ITGB3 and ITGA5/ITGB1. Interacts with host KPNB1/importin beta-1 without previous binding to KPNA1/importin alpha-1. Interacts with EIF2AK2. Interacts with host nucleosome assembly protein NAP1L1; this interaction may be required for the transport of Tat within the nucleus, since the two proteins interact at the nuclear rim. Interacts with host C1QBP/SF2P32; this interaction involves lysine-acetylated Tat. Interacts with the host chemokine receptors CCR2, CCR3 and CXCR4. Interacts with host DPP4/CD26; this interaction may trigger an anti-proliferative effect. Interacts with host LDLR. Interacts with the host extracellular matrix metalloproteinase MMP1. Interacts with host PRMT6; this interaction mediates Tat's methylation. Interacts with, and is ubiquitinated by MDM2/Hdm2. Interacts with host PSMC3 and HTATIP2. Interacts with STAB1; this interaction may overcome SATB1-mediated repression of IL2 and IL2RA (interleukin) in T cells by binding to the same domain than HDAC1. Interacts (when acetylated) with human CDK13, thereby increasing HIV-1 mRNA splicing and promoting the production of the doubly spliced HIV-1 protein Nef. In terms of processing, acetylation by EP300, CREBBP, GCN5L2/GCN5 and PCAF regulates the transactivation activity of Tat. Post-translationally, phosphorylated by EIF2AK2 on serine and threonine residues adjacent to the basic region important for TAR RNA binding and function. Phosphorylation of Tat by EIF2AK2 is dependent on the prior activation of EIF2AK2 by dsRNA. Asymmetrical arginine methylation by host PRMT6 seems to diminish the transactivation capacity of Tat and affects the interaction with host CCNT1. In terms of processing, polyubiquitination by MDM2 does not target Tat to degradation, but activates its transactivation function and fosters interaction with CCNT1 and TAR RNA.

The protein resides in the host nucleus. Its subcellular location is the host nucleolus. The protein localises to the host cytoplasm. It is found in the secreted. Transcriptional activator that increases RNA Pol II processivity, thereby increasing the level of full-length viral transcripts. Recognizes a hairpin structure at the 5'-LTR of the nascent viral mRNAs referred to as the transactivation responsive RNA element (TAR) and recruits the cyclin T1-CDK9 complex (P-TEFb complex) that will in turn hyperphosphorylate the RNA polymerase II to allow efficient elongation. The CDK9 component of P-TEFb and other Tat-activated kinases hyperphosphorylate the C-terminus of RNA Pol II that becomes stabilized and much more processive. Other factors such as HTATSF1/Tat-SF1, SUPT5H/SPT5, and HTATIP2 are also important for Tat's function. Besides its effect on RNA Pol II processivity, Tat induces chromatin remodeling of proviral genes by recruiting the histone acetyltransferases (HATs) CREBBP, EP300 and PCAF to the chromatin. This also contributes to the increase in proviral transcription rate, especially when the provirus integrates in transcriptionally silent region of the host genome. To ensure maximal activation of the LTR, Tat mediates nuclear translocation of NF-kappa-B by interacting with host RELA. Through its interaction with host TBP, Tat may also modulate transcription initiation. Tat can reactivate a latently infected cell by penetrating in it and transactivating its LTR promoter. In the cytoplasm, Tat is thought to act as a translational activator of HIV-1 mRNAs. Functionally, extracellular circulating Tat can be endocytosed by surrounding uninfected cells via the binding to several surface receptors such as CD26, CXCR4, heparan sulfate proteoglycans (HSPG) or LDLR. Neurons are rarely infected, but they internalize Tat via their LDLR. Endosomal low pH allows Tat to cross the endosome membrane to enter the cytosol and eventually further translocate into the nucleus, thereby inducing severe cell dysfunctions ranging from cell activation to cell death. Through its interaction with nuclear HATs, Tat is potentially able to control the acetylation-dependent cellular gene expression. Tat seems to inhibit the HAT activity of KAT5/Tip60 and TAF1, and consequently modify the expression of specific cellular genes. Modulates the expression of many cellular genes involved in cell survival, proliferation or in coding for cytokines (such as IL10) or cytokine receptors. May be involved in the derepression of host interleukin IL2 expression. Mediates the activation of cyclin-dependent kinases and dysregulation of microtubule network. Tat plays a role in T-cell and neurons apoptosis. Tat induced neurotoxicity and apoptosis probably contribute to neuroAIDS. Host extracellular matrix metalloproteinase MMP1 cleaves Tat and decreases Tat's mediated neurotoxicity. Circulating Tat also acts as a chemokine-like and/or growth factor-like molecule that binds to specific receptors on the surface of the cells, affecting many cellular pathways. In the vascular system, Tat binds to ITGAV/ITGB3 and ITGA5/ITGB1 integrins dimers at the surface of endothelial cells and competes with bFGF for heparin-binding sites, leading to an excess of soluble bFGF. Binds to KDR/VEGFR-2. All these Tat-mediated effects enhance angiogenesis in Kaposi's sarcoma lesions. The chain is Protein Tat from Homo sapiens (Human).